The following is a 499-amino-acid chain: Thermostable carboxypeptidase 1 (499 aa).

Positions 6–499 constitute a Peptidase M32 domain; sequence QNETIKQILA…FVRWVKEKYL (494 aa). The HPF motif lies at 238–240; that stretch reads HPF. The DXRXT motif lies at 248-252; the sequence is DVRIT. H269 serves as a coordination point for Co(2+). Residues 269-273 carry the HEXXH motif; sequence HEFGH. Residue E270 is the Proton donor/acceptor of the active site. Residues H273 and E299 each coordinate Co(2+). An HES/GQ motif is present at residues 298-301; sequence HESQ. Positions 350–355 match the I/NRXXA/SD motif; that stretch reads IRTEAD. Residues 405–412 carry the GXXQDXHW motif; that stretch reads GILQDIHW.

The protein belongs to the peptidase M32 family. Homodimer. Co(2+) serves as cofactor. It depends on Mn(2+) as a cofactor.

It catalyses the reaction Release of a C-terminal amino acid with broad specificity, except for -Pro.. Its activity is regulated as follows. EDTA and DTT reversibly abolish carboxypeptidase activity. In terms of biological role, broad specificity carboxypetidase that releases amino acids sequentially from the C-terminus, including neutral, aromatic, polar and basic residues, but not Pro, Gly, Asp and Glu. The sequence is that of Thermostable carboxypeptidase 1 from Pyrococcus furiosus (strain ATCC 43587 / DSM 3638 / JCM 8422 / Vc1).